The primary structure comprises 773 residues: Lon protease homolog 2, peroxisomal (773 aa).

The Lon N-terminal domain occupies 9 to 198; that stretch reads LPVIVVDSGV…MCEKWMQMQR (190 aa). 336–343 contacts ATP; that stretch reads GPPGIGKT. The Lon proteolytic domain occupies 587–766; that stretch reads PLPPGVCFGL…EDVIEAMMEK (180 aa). Catalysis depends on residues Ser-672 and Lys-715. The Microbody targeting signal motif lies at 771–773; that stretch reads AKL.

This sequence belongs to the peptidase S16 family.

The protein localises to the peroxisome matrix. It carries out the reaction Hydrolysis of proteins in presence of ATP.. Its function is as follows. ATP-dependent serine protease that mediates the selective degradation of misfolded and unassembled polypeptides in the peroxisomal matrix. Necessary for type 2 peroxisome targeting signal (PTS2)-containing protein processing and facilitates peroxisome matrix protein import. In Caenorhabditis briggsae, this protein is Lon protease homolog 2, peroxisomal.